Here is a 199-residue protein sequence, read N- to C-terminus: NAD(P)H dehydrogenase (quinone) (199 aa).

The Flavodoxin-like domain occupies I4–V190. Residues S10–I15 and T78–F80 each bind FMN. Residue Y12 participates in NAD(+) binding. Residue W98 coordinates substrate. FMN contacts are provided by residues S113–G119 and H134.

The protein belongs to the WrbA family. Requires FMN as cofactor.

The catalysed reaction is a quinone + NADH + H(+) = a quinol + NAD(+). It catalyses the reaction a quinone + NADPH + H(+) = a quinol + NADP(+). The chain is NAD(P)H dehydrogenase (quinone) from Rhizorhabdus wittichii (strain DSM 6014 / CCUG 31198 / JCM 15750 / NBRC 105917 / EY 4224 / RW1) (Sphingomonas wittichii).